The primary structure comprises 417 residues: Serine hydroxymethyltransferase (417 aa).

Residues leucine 120 and glycine 124–leucine 126 each bind (6S)-5,6,7,8-tetrahydrofolate. The residue at position 229 (lysine 229) is an N6-(pyridoxal phosphate)lysine.

The protein belongs to the SHMT family. Homodimer. Pyridoxal 5'-phosphate serves as cofactor.

The protein localises to the cytoplasm. It catalyses the reaction (6R)-5,10-methylene-5,6,7,8-tetrahydrofolate + glycine + H2O = (6S)-5,6,7,8-tetrahydrofolate + L-serine. The protein operates within one-carbon metabolism; tetrahydrofolate interconversion. Its pathway is amino-acid biosynthesis; glycine biosynthesis; glycine from L-serine: step 1/1. Its function is as follows. Catalyzes the reversible interconversion of serine and glycine with tetrahydrofolate (THF) serving as the one-carbon carrier. This reaction serves as the major source of one-carbon groups required for the biosynthesis of purines, thymidylate, methionine, and other important biomolecules. Also exhibits THF-independent aldolase activity toward beta-hydroxyamino acids, producing glycine and aldehydes, via a retro-aldol mechanism. The chain is Serine hydroxymethyltransferase from Anaeromyxobacter sp. (strain Fw109-5).